A 335-amino-acid chain; its full sequence is Phosphatidylcholine:ceramide cholinephosphotransferase 2 (335 aa).

5 consecutive transmembrane segments (helical) span residues 60-80 (LTAFLCLMLSAFLNFFLLTVI), 104-124 (WSVGDVLSTVSSVVAFTIIFL), 136-156 (FLLGAIMYGLRAVILGVTFLP), 200-220 (ILCGDLMFSGHTVVLTIMYFV), and 229-249 (LVILRYIAAPITFLGIAALVV). Residue His-210 is part of the active site. Residues His-253 and Asp-257 contribute to the active site. A helical membrane pass occupies residues 258–278 (VLIAYWLTSHVFWSYHQIFEM). At 279 to 335 (RKDDRPQAPLSRLWWFWLCYWFESDVADGKLVNKWNWPLEGPQRMHTIMNRINYKLQ) the chain is on the cytoplasmic side.

Belongs to the sphingomyelin synthase family.

It localises to the membrane. It carries out the reaction an N-acylsphing-4-enine + a 1,2-diacyl-sn-glycero-3-phosphocholine = a sphingomyelin + a 1,2-diacyl-sn-glycerol. The catalysed reaction is an N-acyl-15-methylhexadecasphing-4-enine + a 1,2-diacyl-sn-glycero-3-phosphocholine = an N-acyl-15-methylhexadecasphing-4-enine-1-phosphocholine + a 1,2-diacyl-sn-glycerol. The protein operates within lipid metabolism; sphingolipid metabolism. Functionally, sphingomyelin synthases (SM synthase or SMS) synthesize the sphingolipid sphingomyelin (SM) through transfer of the phosphatidyl head group of 1,2-diacyl-sn-glycero-3-phosphocholine (phosphatidylcholine, PC) on to the primary hydroxyl of ceramide (N-acylsphingoid base), yielding 1,2-diacyl-sn-glycerol (diacylglycerol, DAG) as a side product. Functions as a bidirectional lipid cholinephosphotransferases capable of converting PC and ceramide to SM and DAG and vice versa depending on the respective levels of ceramide and DAG as phosphocholine acceptors, respectively. This Caenorhabditis elegans protein is Phosphatidylcholine:ceramide cholinephosphotransferase 2 (sms-2).